The chain runs to 444 residues: DNA repair protein RadA (444 aa).

The C4-type zinc finger occupies 8 to 25; the sequence is CSNCGNISPKWSGQCFDC. Residue 89–96 coordinates ATP; that stretch reads GDPGIGKS. Residues 248–252 carry the RadA KNRFG motif motif; sequence KNRFG. Positions 347-444 are lon-protease-like; sequence EVYLSIAGGL…HLKDLKEIIK (98 aa).

Belongs to the RecA family. RadA subfamily.

DNA-dependent ATPase involved in processing of recombination intermediates, plays a role in repairing DNA breaks. Stimulates the branch migration of RecA-mediated strand transfer reactions, allowing the 3' invading strand to extend heteroduplex DNA faster. Binds ssDNA in the presence of ADP but not other nucleotides, has ATPase activity that is stimulated by ssDNA and various branched DNA structures, but inhibited by SSB. Does not have RecA's homology-searching function. The chain is DNA repair protein RadA from Rickettsia conorii (strain ATCC VR-613 / Malish 7).